Reading from the N-terminus, the 307-residue chain is Pantothenate kinase (307 aa).

87–94 (GSVAVGKS) contacts ATP.

This sequence belongs to the prokaryotic pantothenate kinase family.

Its subcellular location is the cytoplasm. It carries out the reaction (R)-pantothenate + ATP = (R)-4'-phosphopantothenate + ADP + H(+). It functions in the pathway cofactor biosynthesis; coenzyme A biosynthesis; CoA from (R)-pantothenate: step 1/5. The sequence is that of Pantothenate kinase from Vibrio vulnificus (strain CMCP6).